The primary structure comprises 300 residues: GTPase Era (300 aa).

An Era-type G domain is found at 8-176; it reads RCGYVAIVGR…ERLVAGRLPQ (169 aa). The G1 stretch occupies residues 16–23; sequence GRPNVGKS. 16–23 contacts GTP; the sequence is GRPNVGKS. The interval 42–46 is G2; the sequence is QTTRH. The G3 stretch occupies residues 63 to 66; the sequence is DTPG. Residues 63–67 and 125–128 each bind GTP; these read DTPGL and NKAD. Residues 125–128 are G4; that stretch reads NKAD. Residues 155–157 are G5; it reads ISA. A KH type-2 domain is found at 199 to 283; sequence VREKIMRQLG…MLNLWVKVKG (85 aa).

The protein belongs to the TRAFAC class TrmE-Era-EngA-EngB-Septin-like GTPase superfamily. Era GTPase family. Monomer.

The protein localises to the cytoplasm. It is found in the cell inner membrane. Its function is as follows. An essential GTPase that binds both GDP and GTP, with rapid nucleotide exchange. Plays a role in 16S rRNA processing and 30S ribosomal subunit biogenesis and possibly also in cell cycle regulation and energy metabolism. This is GTPase Era from Azotobacter vinelandii (strain DJ / ATCC BAA-1303).